Reading from the N-terminus, the 465-residue chain is Presenilin spe-4 (465 aa).

Topologically, residues 1–18 (MDTLRSISSELVRSSQLR) are cytoplasmic. Residues 19–39 (WTLFSVIANMSLTLSIWIGVY) form a helical membrane-spanning segment. Over 40–71 (NMEVNSELSKTYFLDPSFEQTTGNLLLDGFIN) the chain is Lumenal. The chain crosses the membrane as a helical span at residues 72 to 92 (GVGTILVLGCVSFIMLAFVLF). Topologically, residues 93-96 (DFRR) are cytoplasmic. The chain crosses the membrane as a helical span at residues 97–117 (IVKAWLTLSCLLILFGVSAQT). The Lumenal portion of the chain corresponds to 118-136 (LHDMFSQVFDQDDNNQYYM). The chain crosses the membrane as a helical span at residues 137 to 157 (TIVLIVVPTVVYGFGGIYAFF). Residues 158 to 160 (SNS) are Cytoplasmic-facing. A helical membrane pass occupies residues 161–181 (SLILHQIFVVTNCSLISVFYL). The Lumenal portion of the chain corresponds to 182–190 (RVFPSKTTW). A helical membrane pass occupies residues 191 to 211 (FVLWIVLFWDLFAVLAPMGPL). D200 is an active-site residue. At 212 to 389 (KKVQEKASDY…DALNDGEVLR (178 aa)) the chain is on the cytoplasmic side. Residues 287-356 (INPDSVPTEH…SDISTAEECD (70 aa)) form a disordered region. Over residues 326–350 (SETSSGSSNLSSSDSSTTVSTSDIS) the composition is skewed to low complexity. The chain crosses the membrane as a helical span at residues 390–410 (LGFGDFVFYSLLIGQAAASGC). D394 is an active-site residue. Position 411 (P411) is a topological domain, lumenal. A helical transmembrane segment spans residues 412 to 432 (FAVISAALGILFGLVVTLTVF). Over 433–439 (STEESTT) the chain is Cytoplasmic. The short motif at 440–442 (PAL) is the PAL element. The helical intramembrane region spans 440 to 460 (PALPLPVICGTFCYFSSMFFW). The Cytoplasmic portion of the chain corresponds to 461–465 (EQLYG).

It belongs to the peptidase A22A family. In terms of assembly, homodimer. Potential component of the gamma-secretase complex, a complex probably composed of the presenilin homodimer (sel-12, hop-1 or spe-4), nicastrin (aph-2), aph-1 and pen-2.

Its subcellular location is the endoplasmic reticulum membrane. The protein localises to the golgi apparatus. The protein resides in the cis-Golgi network membrane. Functionally, potential catalytic subunit of the gamma-secretase complex during spermatogenesis, an endoprotease complex that catalyzes the intramembrane cleavage of integral membrane proteins such as Notch receptors (lin-12 or glp-1). Involved in spermatid formation during meiosis II. May be required for proper localization of macromolecules that are subject to asymmetric partitioning during spermatogenesis. The chain is Presenilin spe-4 from Caenorhabditis elegans.